A 212-amino-acid polypeptide reads, in one-letter code: Guanylate kinase (212 aa).

Residues 5-187 enclose the Guanylate kinase-like domain; the sequence is GILCIISAPS…ALMHLQSIML (183 aa). 12-19 contributes to the ATP binding site; sequence APSGTGKS.

Belongs to the guanylate kinase family.

The protein resides in the cytoplasm. It catalyses the reaction GMP + ATP = GDP + ADP. In terms of biological role, essential for recycling GMP and indirectly, cGMP. This is Guanylate kinase from Blochmanniella pennsylvanica (strain BPEN).